Here is a 160-residue protein sequence, read N- to C-terminus: Large ribosomal subunit protein bL19 (160 aa).

The protein belongs to the bacterial ribosomal protein bL19 family.

Functionally, this protein is located at the 30S-50S ribosomal subunit interface and may play a role in the structure and function of the aminoacyl-tRNA binding site. This is Large ribosomal subunit protein bL19 from Prochlorococcus marinus subsp. pastoris (strain CCMP1986 / NIES-2087 / MED4).